The chain runs to 381 residues: 1-deoxy-D-xylulose 5-phosphate reductoisomerase (381 aa).

Residues threonine 11, glycine 12, serine 13, isoleucine 14, asparagine 37, and asparagine 121 each coordinate NADPH. Lysine 122 contributes to the 1-deoxy-D-xylulose 5-phosphate binding site. Glutamate 123 provides a ligand contact to NADPH. Aspartate 147 lines the Mn(2+) pocket. Serine 148, glutamate 149, serine 173, and histidine 196 together coordinate 1-deoxy-D-xylulose 5-phosphate. Glutamate 149 is a Mn(2+) binding site. An NADPH-binding site is contributed by glycine 202. 4 residues coordinate 1-deoxy-D-xylulose 5-phosphate: serine 209, asparagine 214, lysine 215, and glutamate 218. Glutamate 218 contacts Mn(2+).

The protein belongs to the DXR family. Requires Mg(2+) as cofactor. The cofactor is Mn(2+).

The enzyme catalyses 2-C-methyl-D-erythritol 4-phosphate + NADP(+) = 1-deoxy-D-xylulose 5-phosphate + NADPH + H(+). It participates in isoprenoid biosynthesis; isopentenyl diphosphate biosynthesis via DXP pathway; isopentenyl diphosphate from 1-deoxy-D-xylulose 5-phosphate: step 1/6. In terms of biological role, catalyzes the NADPH-dependent rearrangement and reduction of 1-deoxy-D-xylulose-5-phosphate (DXP) to 2-C-methyl-D-erythritol 4-phosphate (MEP). This Ruminiclostridium cellulolyticum (strain ATCC 35319 / DSM 5812 / JCM 6584 / H10) (Clostridium cellulolyticum) protein is 1-deoxy-D-xylulose 5-phosphate reductoisomerase.